A 304-amino-acid polypeptide reads, in one-letter code: tRNA (guanine(9)-N1)-methyltransferase (304 aa).

2 stretches are compositionally biased toward basic and acidic residues: residues M1 to T26 and R42 to I72. The segment at M1 to I72 is disordered. Positions Q81–L276 constitute an SAM-dependent MTase TRM10-type domain. Residues L183, G203, D207–Y211, C215, L229, and K241–L243 each bind S-adenosyl-L-methionine. The Proton acceptor role is filled by D207. The interval S282–N304 is disordered. The residue at position 296 (S296) is a Phosphoserine.

It belongs to the class IV-like SAM-binding methyltransferase superfamily. TRM10 family. Monomer.

The protein localises to the cytoplasm. It is found in the nucleus. The catalysed reaction is guanosine(9) in tRNA + S-adenosyl-L-methionine = N(1)-methylguanosine(9) in tRNA + S-adenosyl-L-homocysteine + H(+). In terms of biological role, S-adenosyl-L-methionine-dependent guanine N(1)-methyltransferase that catalyzes the formation of N(1)-methylguanine at position 9 (m1G9) in cytoplasmic tRNA. This Schizosaccharomyces pombe (strain 972 / ATCC 24843) (Fission yeast) protein is tRNA (guanine(9)-N1)-methyltransferase.